A 423-amino-acid polypeptide reads, in one-letter code: Putative competence-damage inducible protein (423 aa).

The protein belongs to the CinA family.

The protein is Putative competence-damage inducible protein of Streptococcus uberis (strain ATCC BAA-854 / 0140J).